We begin with the raw amino-acid sequence, 242 residues long: Type III pantothenate kinase (242 aa).

6–13 (DAGNTRLK) is an ATP binding site. Residues Tyr-90 and 97 to 100 (GADR) each bind substrate. The Proton acceptor role is filled by Asp-99. Asp-119 is a binding site for K(+). ATP is bound at residue Ser-122. Thr-174 serves as a coordination point for substrate.

This sequence belongs to the type III pantothenate kinase family. As to quaternary structure, homodimer. Requires NH4(+) as cofactor. K(+) serves as cofactor.

It localises to the cytoplasm. It carries out the reaction (R)-pantothenate + ATP = (R)-4'-phosphopantothenate + ADP + H(+). The protein operates within cofactor biosynthesis; coenzyme A biosynthesis; CoA from (R)-pantothenate: step 1/5. Functionally, catalyzes the phosphorylation of pantothenate (Pan), the first step in CoA biosynthesis. The chain is Type III pantothenate kinase from Marinobacter nauticus (strain ATCC 700491 / DSM 11845 / VT8) (Marinobacter aquaeolei).